Consider the following 304-residue polypeptide: uncharacterized protein (304 aa).

The disordered stretch occupies residues 1-183 (MTAPNEPGAL…ARVQLSARRS (183 aa)). Residues 132–166 (PTPRAPQRNPAPARPAEGGAGSRGDSAAGSSGGRS) are compositionally biased toward low complexity. 2 consecutive transmembrane segments (helical) span residues 206 to 226 (LLLS…LYLV) and 265 to 285 (FLIG…GAFV).

To M.leprae ML0007.

It localises to the cell membrane. This is an uncharacterized protein from Mycobacterium tuberculosis (strain ATCC 25618 / H37Rv).